A 759-amino-acid chain; its full sequence is Nucleolar RNA helicase 2-A (759 aa).

Positions 1-154 are disordered; the sequence is MPVKVYAEEM…KKRKTDTTEI (154 aa). The span at 77-86 shows a compositional bias: acidic residues; the sequence is ETAEECDGEQ. Residues 179–207 carry the Q motif motif; sequence GDFSKFPLSKETIKNLQAKGVSYLFPIQS. A Helicase ATP-binding domain is found at 210–389; the sequence is FHTAYSGKDV…KKYMRKQFEK (180 aa). ATP is bound at residue 223 to 230; it reads ARTGTGKT. A DEAD box motif is present at residues 332 to 335; it reads DEVD. Positions 422 to 566 constitute a Helicase C-terminal domain; that stretch reads DLVQVYSGSH…VGVPSLLNVA (145 aa). Residues 709-759 form a disordered region; sequence QESERNFDGPRNRGFGGRGRRPFDRRNNSRNSNRGGGGRGRNRNGGFRRGR. The span at 710–719 shows a compositional bias: basic and acidic residues; that stretch reads ESERNFDGPR. Over residues 748–759 the composition is skewed to basic residues; it reads GRNRNGGFRRGR.

This sequence belongs to the DEAD box helicase family. DDX21/DDX50 subfamily. As to expression, widely expressed. Expressed at higher level in stomach. Expressed at higher level compared to ddx21-b.

It localises to the nucleus. It is found in the nucleolus. The protein resides in the nucleoplasm. Its subcellular location is the cytoplasm. The protein localises to the cytosol. It localises to the mitochondrion. It catalyses the reaction ATP + H2O = ADP + phosphate + H(+). Its function is as follows. RNA helicase that acts as a sensor of the transcriptional status of both RNA polymerase (Pol) I and II: promotes ribosomal RNA (rRNA) processing and transcription from polymerase II (Pol II). Binds various RNAs, such as rRNAs, snoRNAs, 7SK and, at lower extent, mRNAs. In the nucleolus, localizes to rDNA locus, where it directly binds rRNAs and snoRNAs, and promotes rRNA transcription, processing and modification. Required for rRNA 2'-O-methylation, possibly by promoting the recruitment of late-acting snoRNAs SNORD56 and SNORD58 with pre-ribosomal complexes. In the nucleoplasm, binds 7SK RNA and is recruited to the promoters of Pol II-transcribed genes: acts by facilitating the release of P-TEFb from inhibitory 7SK snRNP in a manner that is dependent on its helicase activity, thereby promoting transcription of its target genes. Required to prevent R-loop-associated DNA damage and transcription-associated genomic instability. The polypeptide is Nucleolar RNA helicase 2-A (ddx21-a) (Xenopus laevis (African clawed frog)).